Here is a 136-residue protein sequence, read N- to C-terminus: Protein NrdI (136 aa).

This sequence belongs to the NrdI family.

Probably involved in ribonucleotide reductase function. This Citrobacter koseri (strain ATCC BAA-895 / CDC 4225-83 / SGSC4696) protein is Protein NrdI.